We begin with the raw amino-acid sequence, 449 residues long: Required for meiotic nuclear division protein 1 homolog (449 aa).

A mitochondrion-targeting transit peptide spans 1 to 16 (MPATLLRAVAGSHRVL).

It belongs to the RMD1/sif2 family. Homooligomer.

It localises to the mitochondrion. In terms of biological role, required for mitochondrial translation, possibly by coordinating the assembly or maintenance of the mitochondrial ribosome. The polypeptide is Required for meiotic nuclear division protein 1 homolog (RMND1) (Pongo abelii (Sumatran orangutan)).